Here is a 294-residue protein sequence, read N- to C-terminus: Cytidine deaminase (294 aa).

CMP/dCMP-type deaminase domains follow at residues 48–168 (DEDA…FGPK) and 186–294 (LEGD…VLLG). Substrate is bound at residue 89–91 (NME). His102 lines the Zn(2+) pocket. The active-site Proton donor is the Glu104. Residues Cys129 and Cys132 each coordinate Zn(2+).

This sequence belongs to the cytidine and deoxycytidylate deaminase family. Homodimer. It depends on Zn(2+) as a cofactor.

The catalysed reaction is cytidine + H2O + H(+) = uridine + NH4(+). The enzyme catalyses 2'-deoxycytidine + H2O + H(+) = 2'-deoxyuridine + NH4(+). This enzyme scavenges exogenous and endogenous cytidine and 2'-deoxycytidine for UMP synthesis. The chain is Cytidine deaminase from Citrobacter koseri (strain ATCC BAA-895 / CDC 4225-83 / SGSC4696).